Consider the following 155-residue polypeptide: Small ribosomal subunit protein uS7cz/uS7cy (155 aa).

This sequence belongs to the universal ribosomal protein uS7 family. Part of the 30S ribosomal subunit.

It is found in the plastid. It localises to the chloroplast. Its function is as follows. One of the primary rRNA binding proteins, it binds directly to 16S rRNA where it nucleates assembly of the head domain of the 30S subunit. The sequence is that of Small ribosomal subunit protein uS7cz/uS7cy (rps7-A) from Ceratophyllum demersum (Rigid hornwort).